The chain runs to 303 residues: Dipeptide transport system permease protein DppB (303 aa).

The next 7 membrane-spanning stretches (helical) occupy residues 9 to 29, 62 to 82, 93 to 113, 129 to 149, 166 to 186, 227 to 247, and 269 to 289; these read LGLL…MMQV, YFIY…IYTN, LPVS…LGAL, IFGF…GTLI, GTFS…MAVV, IPML…SVLI, and FPVI…FILV. Residues 93 to 290 enclose the ABC transmembrane type-1 domain; the sequence is LPVSMQLGTQ…VILMVFILVT (198 aa).

Belongs to the binding-protein-dependent transport system permease family. OppBC subfamily. As to quaternary structure, the complex is composed of two ATP-binding proteins (DppD and DppF), two transmembrane proteins (DppB and DppC) and a solute-binding protein (DppA).

Its subcellular location is the cell membrane. Its function is as follows. Part of the ABC transporter DppABCDF involved in dipeptide transport. Responsible for the translocation of the substrate across the membrane. In Lactococcus lactis subsp. cremoris (strain MG1363), this protein is Dipeptide transport system permease protein DppB.